The sequence spans 366 residues: MASQLRLHLAATPPLLPHRRPHLARPLCPTLNPIRAPLPPLSRVLSHARPARAVGGGIEPKEGVVAEGDESGGGPVLVGEDSAAFELKDQSVASWAYFAGILGAVLVALNVLWIDPSTGVGTKFLDAVASVSDSHEVVMLLLTIIFAVVHSGMASLRESGEKIVGERVYRVLFAGISLPLAVTTIVYFINHRYDGTQLWQVQGITGIHELLWFSSFISFFFLYPSTFNLLEVAAVDKPKLHMWETGIMRITRHPQMVGQVIWCLAHTLWIGNSVAVAASVGLISHHLFGAWNGDRRLLSRYGEAFEVLKKRTSVMPFAAIIDGRQKLPKDYHKEFFRLPYVAITMLTLGAYFAHPLMQASSYQLPW.

The N-terminal 45 residues, 1–45 (MASQLRLHLAATPPLLPHRRPHLARPLCPTLNPIRAPLPPLSRVL), are a transit peptide targeting the chloroplast. Helical transmembrane passes span 94–114 (SWAY…VLWI), 136–156 (EVVM…MASL), 171–191 (VLFA…FINH), 203–223 (GITG…FFLY), 260–280 (VIWC…AASV), and 338–358 (LPYV…PLMQ).

In terms of tissue distribution, expressed in leaves and roots, and at lower levels in embryos and endosperm.

The protein localises to the plastid. It is found in the chloroplast membrane. The enzyme catalyses 9,9',15-tri-cis-zeta-carotene = 9,9'-di-cis-zeta-carotene. Isomerase involved in the biosynthesis of carotenoids. Catalyzes the cis- to trans-conversion of the 15-cis-bond in 9,15,9'-tri-cis-zeta-carotene. The chain is 15-cis-zeta-carotene isomerase, chloroplastic from Zea mays (Maize).